Reading from the N-terminus, the 101-residue chain is MKDKGKLVIWPAYIDQTRSRSNGRIISRKNAVKEPHLNEIKDAAKNLGLNPEVEPEKAYPKSWWEVSGRVLVDDRGPKSVIAKQISLEIRKKRGKGVPAKT.

Belongs to the SRP19 family. As to quaternary structure, part of the signal recognition particle protein translocation system, which is composed of SRP and FtsY. Archaeal SRP consists of a 7S RNA molecule of 300 nucleotides and two protein subunits: SRP54 and SRP19.

The protein resides in the cytoplasm. Its function is as follows. Involved in targeting and insertion of nascent membrane proteins into the cytoplasmic membrane. Binds directly to 7S RNA and mediates binding of the 54 kDa subunit of the SRP. The sequence is that of Signal recognition particle 19 kDa protein from Methanosarcina acetivorans (strain ATCC 35395 / DSM 2834 / JCM 12185 / C2A).